The following is a 370-amino-acid chain: Histidinol-phosphate aminotransferase (370 aa).

At K229 the chain carries N6-(pyridoxal phosphate)lysine.

Belongs to the class-II pyridoxal-phosphate-dependent aminotransferase family. Histidinol-phosphate aminotransferase subfamily. In terms of assembly, homodimer. It depends on pyridoxal 5'-phosphate as a cofactor.

The catalysed reaction is L-histidinol phosphate + 2-oxoglutarate = 3-(imidazol-4-yl)-2-oxopropyl phosphate + L-glutamate. It participates in amino-acid biosynthesis; L-histidine biosynthesis; L-histidine from 5-phospho-alpha-D-ribose 1-diphosphate: step 7/9. The sequence is that of Histidinol-phosphate aminotransferase from Helicobacter hepaticus (strain ATCC 51449 / 3B1).